We begin with the raw amino-acid sequence, 74 residues long: Anionic peptide clone 8 (74 aa).

A signal peptide spans 1-24 (MVSKSLIVLLLVSVLVSTFFTTEA).

This sequence belongs to the non-disulfide-bridged peptide (NDBP) superfamily. Long chain multifunctional peptide (group 2) family. In terms of tissue distribution, expressed by the venom gland.

It is found in the secreted. Functionally, may be an antimicrobial peptide. The chain is Anionic peptide clone 8 from Tityus costatus (Brazilian scorpion).